A 124-amino-acid polypeptide reads, in one-letter code: Small ribosomal subunit protein uS13 (124 aa).

Residues 95–124 are disordered; it reads GLPVRGQRTRHNARTRKGPRKTVGAKKGKR. Residues 101–124 are compositionally biased toward basic residues; sequence QRTRHNARTRKGPRKTVGAKKGKR.

The protein belongs to the universal ribosomal protein uS13 family. In terms of assembly, part of the 30S ribosomal subunit. Forms a loose heterodimer with protein S19. Forms two bridges to the 50S subunit in the 70S ribosome.

Its function is as follows. Located at the top of the head of the 30S subunit, it contacts several helices of the 16S rRNA. In the 70S ribosome it contacts the 23S rRNA (bridge B1a) and protein L5 of the 50S subunit (bridge B1b), connecting the 2 subunits; these bridges are implicated in subunit movement. Contacts the tRNAs in the A and P-sites. The polypeptide is Small ribosomal subunit protein uS13 (Coprothermobacter proteolyticus (strain ATCC 35245 / DSM 5265 / OCM 4 / BT)).